We begin with the raw amino-acid sequence, 149 residues long: Transcriptional repressor NrdR (149 aa).

A zinc finger lies at 3-34 (CPFCNADDTKVIDSRLVADGHQVRRRRECLVC). One can recognise an ATP-cone domain in the interval 49–139 (PRVIKSNGVR…VYRSFEDIRE (91 aa)).

This sequence belongs to the NrdR family. The cofactor is Zn(2+).

In terms of biological role, negatively regulates transcription of bacterial ribonucleotide reductase nrd genes and operons by binding to NrdR-boxes. The sequence is that of Transcriptional repressor NrdR from Tolumonas auensis (strain DSM 9187 / NBRC 110442 / TA 4).